The sequence spans 330 residues: Holliday junction branch migration complex subunit RuvB (330 aa).

The tract at residues 1-181 is large ATPase domain (RuvB-L); sequence MEDRLVGCRL…FGVINKLELY (181 aa). ATP is bound by residues L20, R21, G62, K65, T66, T67, 128-130, R171, Y181, and R218; that span reads EDY. T66 lines the Mg(2+) pocket. The tract at residues 182-252 is small ATPAse domain (RuvB-S); sequence SVEELGQIVK…IARTGLEALE (71 aa). The tract at residues 255–330 is head domain (RuvB-H); sequence EIGLDAVDRN…AYEHFGLKYE (76 aa). K310 and R315 together coordinate DNA.

It belongs to the RuvB family. Homohexamer. Forms an RuvA(8)-RuvB(12)-Holliday junction (HJ) complex. HJ DNA is sandwiched between 2 RuvA tetramers; dsDNA enters through RuvA and exits via RuvB. An RuvB hexamer assembles on each DNA strand where it exits the tetramer. Each RuvB hexamer is contacted by two RuvA subunits (via domain III) on 2 adjacent RuvB subunits; this complex drives branch migration. In the full resolvosome a probable DNA-RuvA(4)-RuvB(12)-RuvC(2) complex forms which resolves the HJ.

It localises to the cytoplasm. The catalysed reaction is ATP + H2O = ADP + phosphate + H(+). In terms of biological role, the RuvA-RuvB-RuvC complex processes Holliday junction (HJ) DNA during genetic recombination and DNA repair, while the RuvA-RuvB complex plays an important role in the rescue of blocked DNA replication forks via replication fork reversal (RFR). RuvA specifically binds to HJ cruciform DNA, conferring on it an open structure. The RuvB hexamer acts as an ATP-dependent pump, pulling dsDNA into and through the RuvAB complex. RuvB forms 2 homohexamers on either side of HJ DNA bound by 1 or 2 RuvA tetramers; 4 subunits per hexamer contact DNA at a time. Coordinated motions by a converter formed by DNA-disengaged RuvB subunits stimulates ATP hydrolysis and nucleotide exchange. Immobilization of the converter enables RuvB to convert the ATP-contained energy into a lever motion, pulling 2 nucleotides of DNA out of the RuvA tetramer per ATP hydrolyzed, thus driving DNA branch migration. The RuvB motors rotate together with the DNA substrate, which together with the progressing nucleotide cycle form the mechanistic basis for DNA recombination by continuous HJ branch migration. Branch migration allows RuvC to scan DNA until it finds its consensus sequence, where it cleaves and resolves cruciform DNA. This chain is Holliday junction branch migration complex subunit RuvB, found in Acetivibrio thermocellus (strain ATCC 27405 / DSM 1237 / JCM 9322 / NBRC 103400 / NCIMB 10682 / NRRL B-4536 / VPI 7372) (Clostridium thermocellum).